The chain runs to 221 residues: Probable septum site-determining protein MinC (221 aa).

This sequence belongs to the MinC family. As to quaternary structure, interacts with MinD and FtsZ.

In terms of biological role, cell division inhibitor that blocks the formation of polar Z ring septums. Rapidly oscillates between the poles of the cell to destabilize FtsZ filaments that have formed before they mature into polar Z rings. Prevents FtsZ polymerization. The chain is Probable septum site-determining protein MinC from Shewanella baltica (strain OS223).